The sequence spans 481 residues: Heat stress transcription factor A-1b (481 aa).

Residues 1–16 (MESVPESVPSPNSNTP) show a composition bias toward low complexity. Residues 1 to 23 (MESVPESVPSPNSNTPSIPPPVN) are disordered. A DNA-binding region spans residues 25 to 119 (VPPFLSKTYD…LLKSIVRRKP (95 aa)). A hydrophobic repeat HR-A/B region spans residues 138 to 204 (ACVEVGKFGI…QMMSFLAKAV (67 aa)). Polar residues predominate over residues 213–227 (LVQQNNNDGNRQIPG). Positions 213–244 (LVQQNNNDGNRQIPGSNKKRRLPVDEQENRGD) are disordered. The Nuclear localization signal motif lies at 229 to 233 (NKKRR). The span at 234–243 (LPVDEQENRG) shows a compositional bias: basic and acidic residues. Positions 418–427 (DPFWEQFFSV) match the AHA motif. The Nuclear export signal motif lies at 467 to 474 (LTEQMGLL).

It belongs to the HSF family. Class A subfamily. Homotrimer. Binds to HSBP. Post-translationally, exhibits temperature-dependent phosphorylation.

It is found in the cytoplasm. The protein resides in the nucleus. In terms of biological role, transcriptional activator that specifically binds DNA sequence 5'-AGAAnnTTCT-3' known as heat shock promoter elements (HSE). This is Heat stress transcription factor A-1b (HSFA1B) from Arabidopsis thaliana (Mouse-ear cress).